We begin with the raw amino-acid sequence, 103 residues long: ATP-dependent Clp protease adapter protein ClpS 1 (103 aa).

Belongs to the ClpS family. In terms of assembly, binds to the N-terminal domain of the chaperone ClpA.

Involved in the modulation of the specificity of the ClpAP-mediated ATP-dependent protein degradation. In Rhodopseudomonas palustris (strain ATCC BAA-98 / CGA009), this protein is ATP-dependent Clp protease adapter protein ClpS 1.